We begin with the raw amino-acid sequence, 222 residues long: Large ribosomal subunit protein uL3 (222 aa).

The tract at residues 129–150 (HNFRGLPDSHGTERKHRSPGSI) is disordered.

This sequence belongs to the universal ribosomal protein uL3 family. Part of the 50S ribosomal subunit. Forms a cluster with proteins L14 and L19.

In terms of biological role, one of the primary rRNA binding proteins, it binds directly near the 3'-end of the 23S rRNA, where it nucleates assembly of the 50S subunit. The protein is Large ribosomal subunit protein uL3 of Acidothermus cellulolyticus (strain ATCC 43068 / DSM 8971 / 11B).